Here is a 488-residue protein sequence, read N- to C-terminus: (S)-canadine synthase CYP719A21 (488 aa).

Residues 6-26 form a helical membrane-spanning segment; the sequence is LWILTLISTILAVFAAVLIIF. Residue Cys-432 participates in heme binding.

This sequence belongs to the cytochrome P450 family. It depends on heme as a cofactor.

The protein resides in the membrane. The catalysed reaction is (S)-tetrahydrocolumbamine + reduced [NADPH--hemoprotein reductase] + O2 = (S)-canadine + oxidized [NADPH--hemoprotein reductase] + 2 H2O + H(+). The protein operates within alkaloid biosynthesis. Its function is as follows. Cytochrome P450 involved in the biosynthesis of the benzylisoquinoline alkaloid noscapine. Converts (S)-tetrahydrocolumbamine to (S)-canadine. The protein is (S)-canadine synthase CYP719A21 of Papaver somniferum (Opium poppy).